Reading from the N-terminus, the 361-residue chain is Ribosomal RNA large subunit methyltransferase M (361 aa).

Residues S187, 220–223 (CPGG), D239, D259, and D276 each bind S-adenosyl-L-methionine. K305 (proton acceptor) is an active-site residue.

It belongs to the class I-like SAM-binding methyltransferase superfamily. RNA methyltransferase RlmE family. RlmM subfamily. As to quaternary structure, monomer.

The protein localises to the cytoplasm. The enzyme catalyses cytidine(2498) in 23S rRNA + S-adenosyl-L-methionine = 2'-O-methylcytidine(2498) in 23S rRNA + S-adenosyl-L-homocysteine + H(+). Its function is as follows. Catalyzes the 2'-O-methylation at nucleotide C2498 in 23S rRNA. The protein is Ribosomal RNA large subunit methyltransferase M of Shewanella amazonensis (strain ATCC BAA-1098 / SB2B).